A 101-amino-acid polypeptide reads, in one-letter code: MRKFETLLLLSPELAADAREALLGTLTGVVEREQGKMVAADHWGMRDLAYPVQKHMRGYYVRLEYLAPGEAVAEVERNIRISDGIFKFVTVKLADAVEEVA.

The protein belongs to the bacterial ribosomal protein bS6 family.

In terms of biological role, binds together with bS18 to 16S ribosomal RNA. This Nitratidesulfovibrio vulgaris (strain DSM 19637 / Miyazaki F) (Desulfovibrio vulgaris) protein is Small ribosomal subunit protein bS6.